The primary structure comprises 340 residues: Dihydroorotate dehydrogenase (quinone) (340 aa).

FMN-binding positions include 61–65 (AGLDK) and Thr-85. Position 65 (Lys-65) interacts with substrate. Residue 110-114 (NRMGF) participates in substrate binding. Asn-138 and Asn-171 together coordinate FMN. Substrate is bound at residue Asn-171. Ser-174 serves as the catalytic Nucleophile. Substrate is bound at residue Asn-176. FMN contacts are provided by Lys-216 and Thr-244. Residue 245–246 (NT) participates in substrate binding. FMN-binding positions include Gly-267, Gly-296, and 317–318 (YT).

This sequence belongs to the dihydroorotate dehydrogenase family. Type 2 subfamily. As to quaternary structure, monomer. Requires FMN as cofactor.

It is found in the cell membrane. The enzyme catalyses (S)-dihydroorotate + a quinone = orotate + a quinol. It functions in the pathway pyrimidine metabolism; UMP biosynthesis via de novo pathway; orotate from (S)-dihydroorotate (quinone route): step 1/1. Catalyzes the conversion of dihydroorotate to orotate with quinone as electron acceptor. This chain is Dihydroorotate dehydrogenase (quinone), found in Marinobacter nauticus (strain ATCC 700491 / DSM 11845 / VT8) (Marinobacter aquaeolei).